The following is a 2144-amino-acid chain: Cadherin EGF LAG seven-pass G-type receptor 2 (2144 aa).

Cadherin domains follow at residues 1–40 (EDQV…APQF), 41–146 (LRDS…PPVF), 147–248 (EQDE…PPVL), and 253–371 (ILFN…SPLL). Residues 1 to 1605 (EDQVSYTLAI…GEILPLKTLT (1605 aa)) are Extracellular-facing. N-linked (GlcNAc...) asparagine glycosylation is found at Asn-261, Asn-301, Asn-407, and Asn-437. Residues 453–511 (DDNICLREPCENYMRCVSVLRFDSSAPFIASSSVLFRPIHPVGGLRCRCPPGFTGDYCE) form the EGF-like 1; calcium-binding domain. Cystine bridges form between Cys-457–Cys-468, Cys-462–Cys-499, Cys-501–Cys-510, Cys-517–Cys-528, Cys-522–Cys-537, Cys-539–Cys-548, Cys-557–Cys-568, Cys-562–Cys-578, and Cys-580–Cys-590. The region spanning 513-549 (EVDLCYSRPCGPHGHCRSREGGYTCLCRDGYTGEHCE) is the EGF-like 2; calcium-binding domain. Residues 553–591 (RSGRCTPGVCKNGGTCVNLLVGGFKCDCPSGDFEKPFCQ) form the EGF-like 3; calcium-binding domain. The region spanning 592-796 (VTTRSFPARS…IANNGTVPGC (205 aa)) is the Laminin G-like 1 domain. N-linked (GlcNAc...) asparagine glycans are attached at residues Asn-726 and Asn-790. 4 disulfides stabilise this stretch: Cys-770–Cys-796, Cys-803–Cys-814, Cys-808–Cys-823, and Cys-825–Cys-834. The region spanning 799–835 (KKNVCDSNTCHNGGTCVNQWDAFSCECPLGFGGKSCA) is the EGF-like 4; calcium-binding domain. At Asn-816 the chain carries (3R)-3-hydroxyasparagine. Residues 839 to 1016 (ANPQRFLGSS…GESINVEPGC (178 aa)) enclose the Laminin G-like 2 domain. An N-linked (GlcNAc...) asparagine glycan is attached at Asn-966. 14 cysteine pairs are disulfide-bonded: Cys-986-Cys-1016, Cys-1022-Cys-1033, Cys-1027-Cys-1042, Cys-1044-Cys-1053, Cys-1057-Cys-1068, Cys-1062-Cys-1080, Cys-1082-Cys-1091, Cys-1112-Cys-1124, Cys-1114-Cys-1131, Cys-1133-Cys-1146, Cys-1149-Cys-1161, Cys-1151-Cys-1168, Cys-1170-Cys-1179, and Cys-1182-Cys-1194. The EGF-like 5; calcium-binding domain occupies 1018–1053 (WPDPCDSNPCPTNSYCSNDWDSYSCSCDPGYYGDNC). Position 1035 is a (3R)-3-hydroxyasparagine (Asn-1035). N-linked (GlcNAc...) asparagine glycosylation occurs at Asn-1052. In terms of domain architecture, EGF-like 6; calcium-binding spans 1054 to 1092 (TNVCDLNPCEHQSACTRKPSAPHGYICECLPNYLGPYCE). Positions 1108 to 1147 (TCGPCNCDVSKGFDPDCNKTSGECHCKENHYRPPSSPTCL) constitute an EGF-like 7; calcium-binding domain. Asn-1125 carries an N-linked (GlcNAc...) asparagine glycan. One can recognise a Laminin EGF-like domain in the interval 1149–1196 (CDCYPTGSLSRVCDPEDGQCPCKPGVIGRQCDRCDNPFAEVTTNGCEV). 3 N-linked (GlcNAc...) asparagine glycosylation sites follow: Asn-1249, Asn-1268, and Asn-1286. The 171-residue stretch at 1424–1594 (ETTVILPESV…AVLMDVSRRE (171 aa)) folds into the GAIN-B domain. Residues 1439–1466 (PMVRSAGPGEAQETEELARRQRRHPELS) are disordered. Cystine bridges form between Cys-1544-Cys-1576 and Cys-1564-Cys-1578. A GPS region spans residues 1544 to 1594 (CVFWNHSILVSGTGGWSARGCEVVFRNESHVSCQCNHMTSFAVLMDVSRRE). N-linked (GlcNAc...) asparagine glycosylation is found at Asn-1548 and Asn-1570. The helical transmembrane segment at 1606–1626 (YVALGVTLAALMITFLFLTLL) threads the bilayer. The Cytoplasmic segment spans residues 1627 to 1641 (RALRSNQHGIRRNLT). A helical membrane pass occupies residues 1642–1662 (AALGLAQLVFLLGINQADLPF). Ala-1663 is a topological domain (extracellular). Residues 1664 to 1684 (CTVIAILLHFLYLCTFSWALL) form a helical membrane-spanning segment. Over 1685 to 1705 (EALHLYRALTEVRDVNASPMR) the chain is Cytoplasmic. A helical membrane pass occupies residues 1706–1726 (FYYMLGWGVPAFITGLAVGLD). Over 1727–1744 (PEGYGNPDFCWLSIYDTL) the chain is Extracellular. The chain crosses the membrane as a helical span at residues 1745–1765 (IWSFAGPVAFAVSMSVFLYIL). Residues 1766-1789 (SARASCAAQRQGFEKKGPVSGLRS) lie on the Cytoplasmic side of the membrane. Residues 1790-1810 (SFTVLLLLSATWLLALLSVNS) form a helical membrane-spanning segment. Over 1811–1816 (DTLLFH) the chain is Extracellular. The chain crosses the membrane as a helical span at residues 1817–1837 (YLFAACNCVQGPFIFLSYVVL). Residues 1838–2144 (SKEVRKALKF…SEFLFFNFLH (307 aa)) lie on the Cytoplasmic side of the membrane. Positions 1914-2109 (TLNPGQVPPG…PPRPPPRQSL (196 aa)) are disordered. A compositionally biased stretch (acidic residues) spans 1943–1955 (TDSDSDLSLEDDQ). Over residues 2016 to 2025 (GTTTKENSGS) the composition is skewed to polar residues. Residues 2028–2040 (LEERPRENGDALT) show a composition bias toward basic and acidic residues. Residues 2082 to 2095 (GTGSSRGSTASEGS) show a composition bias toward polar residues.

The protein belongs to the G-protein coupled receptor 2 family. LN-TM7 subfamily. As to quaternary structure, heterodimer of 2 chains generated by proteolytic processing; the large extracellular N-terminal fragment and the membrane-bound C-terminal fragment predominantly remain associated and non-covalently linked. Post-translationally, the iron and 2-oxoglutarate dependent 3-hydroxylation of aspartate and asparagine is (R) stereospecific within EGF domains. Autoproteolytically processed at the GPS region of the GAIN-B domain; this cleavage modulates receptor activity. Expressed in the brain. High expression in cerebellum and olfactory bulb. Weaker expression in cerebral cortex, hippocampus and brain stem.

The protein resides in the cell membrane. Functionally, receptor that may have an important role in cell/cell signaling during nervous system formation. The polypeptide is Cadherin EGF LAG seven-pass G-type receptor 2 (Rattus norvegicus (Rat)).